Reading from the N-terminus, the 25-residue chain is Xenoposin precursor fragment BM3 (25 aa).

In terms of tissue distribution, expressed by the skin glands.

The protein resides in the secreted. Antimicrobial peptide. The protein is Xenoposin precursor fragment BM3 of Xenopus boumbaensis (Mawa clawed frog).